The primary structure comprises 297 residues: TGF-beta receptor type-2 (297 aa).

The signal sequence occupies residues 1-23 (MGRGLLGGLWPLHVVLWTRIAST). Over 24–166 (IPPHVPKSVN…NPDLLLVIFQ (143 aa)) the chain is Extracellular. Cystine bridges form between Cys-51/Cys-84, Cys-54/Cys-71, Cys-61/Cys-67, Cys-77/Cys-101, Cys-121/Cys-136, and Cys-138/Cys-143. Asn-70 and Asn-94 each carry an N-linked (GlcNAc...) asparagine glycan. The chain crosses the membrane as a helical span at residues 167 to 187 (VTGVSLLPPLGIAIAVIITFY). Topologically, residues 188-297 (CYRVHRQQKL…KTEKDIFSDL (110 aa)) are cytoplasmic. In terms of domain architecture, Protein kinase spans 244 to 297 (IELDTLVGKGRFAEVYKAKLRQNTSEQFETVAVKIFPYEEYASWKTEKDIFSDL). ATP is bound by residues 250-258 (VGKGRFAEV) and Lys-277.

This sequence belongs to the protein kinase superfamily. TKL Ser/Thr protein kinase family. TGFB receptor subfamily. Homodimer. Heterohexamer; TGFB1, TGFB2 and TGFB3 homodimeric ligands assemble a functional receptor composed of two TGFBR1 and TGFBR2 heterodimers to form a ligand-receptor heterohexamer. The respective affinity of TGFRB1 and TGFRB2 for the ligands may modulate the kinetics of assembly of the receptor and may explain the different biological activities of TGFB1, TGFB2 and TGFB3. Component of a complex composed of TSC22D1 (via N-terminus), TGFBR1 and TGFBR2; the interaction between TSC22D1 and TGFBR1 is inhibited by SMAD7 and promoted by TGFB1. Interacts with DAXX. Interacts with DYNLT4. Interacts with ZFYVE9; ZFYVE9 recruits SMAD2 and SMAD3 to the TGF-beta receptor. Interacts with and is activated by SCUBE3; this interaction does not affect TGFB1-binding to TGFBR2. Interacts with VPS39; this interaction is independent of the receptor kinase activity and of the presence of TGF-beta. Interacts with CLU. It depends on Mg(2+) as a cofactor. Mn(2+) serves as cofactor. Post-translationally, phosphorylated on a Ser/Thr residue in the cytoplasmic domain.

The protein localises to the cell membrane. It is found in the membrane raft. It catalyses the reaction L-threonyl-[receptor-protein] + ATP = O-phospho-L-threonyl-[receptor-protein] + ADP + H(+). The enzyme catalyses L-seryl-[receptor-protein] + ATP = O-phospho-L-seryl-[receptor-protein] + ADP + H(+). Functionally, transmembrane serine/threonine kinase forming with the TGF-beta type I serine/threonine kinase receptor, TGFBR1, the non-promiscuous receptor for the TGF-beta cytokines TGFB1, TGFB2 and TGFB3. Transduces the TGFB1, TGFB2 and TGFB3 signal from the cell surface to the cytoplasm and is thus regulating a plethora of physiological and pathological processes including cell cycle arrest in epithelial and hematopoietic cells, control of mesenchymal cell proliferation and differentiation, wound healing, extracellular matrix production, immunosuppression and carcinogenesis. The formation of the receptor complex composed of 2 TGFBR1 and 2 TGFBR2 molecules symmetrically bound to the cytokine dimer results in the phosphorylation and the activation of TGFRB1 by the constitutively active TGFBR2. Activated TGFBR1 phosphorylates SMAD2 which dissociates from the receptor and interacts with SMAD4. The SMAD2-SMAD4 complex is subsequently translocated to the nucleus where it modulates the transcription of the TGF-beta-regulated genes. This constitutes the canonical SMAD-dependent TGF-beta signaling cascade. Also involved in non-canonical, SMAD-independent TGF-beta signaling pathways. The protein is TGF-beta receptor type-2 (TGFBR2) of Sus scrofa (Pig).